Reading from the N-terminus, the 140-residue chain is uncharacterized protein (140 aa).

This is an uncharacterized protein from Sinorhizobium fredii (strain NBRC 101917 / NGR234).